The chain runs to 261 residues: Glucosamine-6-phosphate deaminase (261 aa).

The Proton acceptor; for enolization step role is filled by aspartate 67. Catalysis depends on asparagine 135, which acts as the For ring-opening step. Histidine 137 (proton acceptor; for ring-opening step) is an active-site residue. Residue glutamate 142 is the For ring-opening step of the active site.

This sequence belongs to the glucosamine/galactosamine-6-phosphate isomerase family. NagB subfamily. As to quaternary structure, homohexamer.

The enzyme catalyses alpha-D-glucosamine 6-phosphate + H2O = beta-D-fructose 6-phosphate + NH4(+). The protein operates within amino-sugar metabolism; N-acetylneuraminate degradation; D-fructose 6-phosphate from N-acetylneuraminate: step 5/5. In terms of biological role, catalyzes the reversible isomerization-deamination of glucosamine 6-phosphate (GlcN6P) to form fructose 6-phosphate (Fru6P) and ammonium ion. The sequence is that of Glucosamine-6-phosphate deaminase from Hahella chejuensis (strain KCTC 2396).